The sequence spans 390 residues: 1-deoxy-D-xylulose 5-phosphate reductoisomerase (390 aa).

Positions 10, 11, 12, 13, and 124 each coordinate NADPH. Residue Lys-125 participates in 1-deoxy-D-xylulose 5-phosphate binding. Glu-126 serves as a coordination point for NADPH. Asp-150 provides a ligand contact to Mn(2+). The 1-deoxy-D-xylulose 5-phosphate site is built by Ser-151, Glu-152, Ser-181, and His-204. Position 152 (Glu-152) interacts with Mn(2+). Gly-210 serves as a coordination point for NADPH. 1-deoxy-D-xylulose 5-phosphate is bound by residues Ser-217, Asn-222, Lys-223, and Glu-226. Glu-226 contributes to the Mn(2+) binding site.

Belongs to the DXR family. Mg(2+) is required as a cofactor. Mn(2+) serves as cofactor.

The catalysed reaction is 2-C-methyl-D-erythritol 4-phosphate + NADP(+) = 1-deoxy-D-xylulose 5-phosphate + NADPH + H(+). It functions in the pathway isoprenoid biosynthesis; isopentenyl diphosphate biosynthesis via DXP pathway; isopentenyl diphosphate from 1-deoxy-D-xylulose 5-phosphate: step 1/6. In terms of biological role, catalyzes the NADPH-dependent rearrangement and reduction of 1-deoxy-D-xylulose-5-phosphate (DXP) to 2-C-methyl-D-erythritol 4-phosphate (MEP). The protein is 1-deoxy-D-xylulose 5-phosphate reductoisomerase of Janthinobacterium sp. (strain Marseille) (Minibacterium massiliensis).